We begin with the raw amino-acid sequence, 355 residues long: Anhydro-N-acetylmuramic acid kinase (355 aa).

9–16 serves as a coordination point for ATP; the sequence is GTSLDGVD.

Belongs to the anhydro-N-acetylmuramic acid kinase family.

It carries out the reaction 1,6-anhydro-N-acetyl-beta-muramate + ATP + H2O = N-acetyl-D-muramate 6-phosphate + ADP + H(+). Its pathway is amino-sugar metabolism; 1,6-anhydro-N-acetylmuramate degradation. The protein operates within cell wall biogenesis; peptidoglycan recycling. Functionally, catalyzes the specific phosphorylation of 1,6-anhydro-N-acetylmuramic acid (anhMurNAc) with the simultaneous cleavage of the 1,6-anhydro ring, generating MurNAc-6-P. Is required for the utilization of anhMurNAc either imported from the medium or derived from its own cell wall murein, and thus plays a role in cell wall recycling. This Paramagnetospirillum magneticum (strain ATCC 700264 / AMB-1) (Magnetospirillum magneticum) protein is Anhydro-N-acetylmuramic acid kinase.